Consider the following 502-residue polypeptide: Lysine--tRNA ligase (502 aa).

Mg(2+) contacts are provided by Glu409 and Glu416.

It belongs to the class-II aminoacyl-tRNA synthetase family. As to quaternary structure, homodimer. The cofactor is Mg(2+).

The protein resides in the cytoplasm. The enzyme catalyses tRNA(Lys) + L-lysine + ATP = L-lysyl-tRNA(Lys) + AMP + diphosphate. The protein is Lysine--tRNA ligase of Prochlorococcus marinus (strain SARG / CCMP1375 / SS120).